Here is a 283-residue protein sequence, read N- to C-terminus: Eukaryotic translation initiation factor 3 subunit K (283 aa).

One can recognise a PCI domain in the interval 52–263 (YDLLANLAIL…EIKATVIREE (212 aa)). The segment at 114–135 (EATTTDADNAGSLSGDDDDDEV) is disordered.

It belongs to the eIF-3 subunit K family. As to quaternary structure, component of the eukaryotic translation initiation factor 3 (eIF-3) complex.

The protein localises to the cytoplasm. Component of the eukaryotic translation initiation factor 3 (eIF-3) complex, which is involved in protein synthesis of a specialized repertoire of mRNAs and, together with other initiation factors, stimulates binding of mRNA and methionyl-tRNAi to the 40S ribosome. The eIF-3 complex specifically targets and initiates translation of a subset of mRNAs involved in cell proliferation. This is Eukaryotic translation initiation factor 3 subunit K from Mycosarcoma maydis (Corn smut fungus).